The chain runs to 197 residues: Imidazoleglycerol-phosphate dehydratase (197 aa).

It belongs to the imidazoleglycerol-phosphate dehydratase family.

It localises to the cytoplasm. It catalyses the reaction D-erythro-1-(imidazol-4-yl)glycerol 3-phosphate = 3-(imidazol-4-yl)-2-oxopropyl phosphate + H2O. The protein operates within amino-acid biosynthesis; L-histidine biosynthesis; L-histidine from 5-phospho-alpha-D-ribose 1-diphosphate: step 6/9. This chain is Imidazoleglycerol-phosphate dehydratase, found in Thioalkalivibrio sulfidiphilus (strain HL-EbGR7).